A 481-amino-acid polypeptide reads, in one-letter code: Glutamate--tRNA ligase 2 (481 aa).

The 'HIGH' region signature appears at 17 to 27 (PSPTGFLHIGG). The segment covering 118 to 139 (AEQRAKKQPQRYDGRWRDRDPS) has biased composition (basic and acidic residues). Residues 118 to 143 (AEQRAKKQPQRYDGRWRDRDPSEAPA) are disordered. The 'KMSKS' region motif lies at 246 to 250 (KLSKR). Lysine 249 contacts ATP.

This sequence belongs to the class-I aminoacyl-tRNA synthetase family. Glutamate--tRNA ligase type 1 subfamily. Monomer.

Its subcellular location is the cytoplasm. The enzyme catalyses tRNA(Glu) + L-glutamate + ATP = L-glutamyl-tRNA(Glu) + AMP + diphosphate. Its function is as follows. Catalyzes the attachment of glutamate to tRNA(Glu) in a two-step reaction: glutamate is first activated by ATP to form Glu-AMP and then transferred to the acceptor end of tRNA(Glu). This chain is Glutamate--tRNA ligase 2, found in Zymomonas mobilis subsp. mobilis (strain ATCC 31821 / ZM4 / CP4).